The primary structure comprises 609 residues: MMMNAFIEPAQHHLASYGLRMSPNTTASNSNAQQQQQQQLEMTQQQQQQQQQQQQQQQQDQESAAATAAAYQNSGYGHFNSYASRDFLLGRREAEYGVAGSAGQASAAADSMLFSGFPAQAAELGSGFGQHPFHSHHHHHQMRMGMADAYAAGHPYNHHGNFPTAAVHHPVVHHPSHHAMSAMHPAGAGAFLRYMRHQPASSASSVKQEMQCLWIDPDQPGLVPPGGRKTCNKVFHSMHEIVTHLTVEHVGGPECTTHACFWVGCSRNGRPFKAKYKLVNHIRVHTGEKPFACPHPGCGKVFARSENLKIHKRTHTGEKPFKCEHEGCDRRFANSSDRKKHSHVHTSDKPYNCRINGCDKSYTHPSSLRKHMKVHGNVDEKSPSHGYDSEGEESSSSSIITGGAQTPPSTRLDGSAGSSSGVSSLSGGSGIKSSPHSIKSEPNPMHSVHLGASSSGSSSTASSSASHLLQHQQHQHQQQQQQQQHQQQAQQQQQLTAHPSDPKSSPALQLMAASASAYLPPPLGPPPSHHHHPHHHQAAPSPGAAAASASMLHHNHHLLYHPAAQHHPPSDWYHTTAPSGSAEAMNPLNHFGHHHHHHHLMHPGAATAY.

A disordered region spans residues 20–41; that stretch reads RMSPNTTASNSNAQQQQQQQLE. Residues 22 to 32 are compositionally biased toward polar residues; sequence SPNTTASNSNA. The C2H2-type 1; atypical zinc finger occupies 210–249; the sequence is MQCLWIDPDQPGLVPPGGRKTCNKVFHSMHEIVTHLTVEH. 4 C2H2-type zinc fingers span residues 258–285, 291–315, 321–345, and 351–375; these read HACFWVGCSRNGRPFKAKYKLVNHIRVH, FACPHPGCGKVFARSENLKIHKRTH, FKCEHEGCDRRFANSSDRKKHSHVH, and YNCRINGCDKSYTHPSSLRKHMKVH. Disordered stretches follow at residues 373–550 and 583–609; these read KVHG…ASAS and EAMNPLNHFGHHHHHHHLMHPGAATAY. Positions 399–409 are enriched in polar residues; sequence IITGGAQTPPS. Low complexity-rich tracts occupy residues 414-434 and 449-498; these read GSAGSSSGVSSLSGGSGIKSS and HLGA…LTAH. Over residues 528–537 the composition is skewed to basic residues; it reads SHHHHPHHHQ. The segment covering 538–550 has biased composition (low complexity); sequence AAPSPGAAAASAS. The span at 591–601 shows a compositional bias: basic residues; that stretch reads FGHHHHHHHLM.

The protein belongs to the GLI C2H2-type zinc-finger protein family. As to expression, expressed throughout all segment primordia; expressed ubiquitously in the ectoderm and mesoderm precursors.

Its subcellular location is the nucleus. In terms of biological role, transcription factor essential for parasegmental subdivision of the embryo. It is involved in the activation of wingless (wg) in odd parasegments. It is also required for the timely activation of wg in the remaining parasegments and for the timely activation of engrailed (en) in all parasegments. The protein is Pair-rule protein odd-paired (opa) of Drosophila melanogaster (Fruit fly).